The chain runs to 254 residues: Small ribosomal subunit protein uS2 (254 aa).

Belongs to the universal ribosomal protein uS2 family.

The polypeptide is Small ribosomal subunit protein uS2 (Borrelia hermsii (strain HS1 / DAH)).